The following is a 192-amino-acid chain: UPF0312 protein ECA1782 (192 aa).

Residues 1 to 23 (MLKKTLLSLTAVSMLASAGSALA) form the signal peptide.

It belongs to the UPF0312 family. Type 1 subfamily.

The protein resides in the periplasm. The chain is UPF0312 protein ECA1782 from Pectobacterium atrosepticum (strain SCRI 1043 / ATCC BAA-672) (Erwinia carotovora subsp. atroseptica).